The primary structure comprises 908 residues: Serine/threonine-protein kinase WARTS homolog (908 aa).

A coiled-coil region spans residues 42 to 70 (EIRVGRHRAKLDEIRESLKAYEHEAGLLS). Low complexity-rich tracts occupy residues 115-125 (VSSAAVSNSNS) and 168-181 (PSTT…TTTE). 4 disordered regions span residues 115–134 (VSSA…GGHK), 162–183 (MIRN…TEES), 203–225 (NNNA…DSSP), and 388–412 (KSRA…VSSP). The span at 392 to 404 (QPPPPQYNQPSEP) shows a compositional bias: pro residues. Residues 439–470 (YMEQHVERLLQQYKEREKRMKQLEKEMVSAQL) adopt a coiled-coil conformation. Residues 502-807 (FTVISHIGVG…TAQVKNHPWF (306 aa)) form the Protein kinase domain. Residues 508–516 (IGVGAFGKV) and lysine 531 contribute to the ATP site. Residue aspartate 625 is the Proton acceptor of the active site. Residues 808 to 874 (RGIDWVNLRK…RHFFDTDSVG (67 aa)) form the AGC-kinase C-terminal domain.

This sequence belongs to the protein kinase superfamily. AGC Ser/Thr protein kinase family. Interacts (via N-terminus) with yap-1 (via WW domain). Mg(2+) is required as a cofactor. As to expression, expressed in muscles and epithelial tissues including pharynx, intestine and hypodermis. Expressed in vulval and spermathecal seam cells.

Its subcellular location is the cytoplasm. The protein localises to the apical cell membrane. It carries out the reaction L-seryl-[protein] + ATP = O-phospho-L-seryl-[protein] + ADP + H(+). It catalyses the reaction L-threonyl-[protein] + ATP = O-phospho-L-threonyl-[protein] + ADP + H(+). Phosphorylates yap-1 which may negatively regulate yap-1 nuclear localization. Plays an essential role in larval development. Regulates growth, the formation of gut granules, lifespan and cell and body sizes probably in synergy with the TGF-beta sma/mab pathway. Does not appear to regulate apoptosis and proliferation. In addition, may synergize with the TGF-beta daf-7 dauer pathway to regulate entry into the dauer stage. Maintains the cellular integrity of intestinal cells by regulating the localization of apical actin and junctional proteins. In Caenorhabditis elegans, this protein is Serine/threonine-protein kinase WARTS homolog.